The sequence spans 361 residues: Phospho-N-acetylmuramoyl-pentapeptide-transferase (361 aa).

The next 10 membrane-spanning stretches (helical) occupy residues 21 to 41 (YLTIRALLAMLSALFIGLMLG), 69 to 89 (VGTPTMGGILILFAFIVSILI), 93 to 113 (WSNIYLWIIIVTSIIFSAIGF), 131 to 151 (SIKFLTQSLSAIVISTWIILI), 168 to 188 (IILPLSVFDFLILSYFVIVGS), 200 to 220 (GLAIMSVILISGALAIFAYFS), 240 to 260 (LFIICAALIGSSLGFLWFNAY), 264 to 284 (IFMGDVGSLSLGAILAVIAIL), 289 to 309 (ILLFIMGGVFVAETLSVIIQV), and 338 to 358 (KIIVRFWIVTLILVLIGLASI).

The protein belongs to the glycosyltransferase 4 family. MraY subfamily. It depends on Mg(2+) as a cofactor.

The protein localises to the cell inner membrane. It carries out the reaction UDP-N-acetyl-alpha-D-muramoyl-L-alanyl-gamma-D-glutamyl-meso-2,6-diaminopimeloyl-D-alanyl-D-alanine + di-trans,octa-cis-undecaprenyl phosphate = di-trans,octa-cis-undecaprenyl diphospho-N-acetyl-alpha-D-muramoyl-L-alanyl-D-glutamyl-meso-2,6-diaminopimeloyl-D-alanyl-D-alanine + UMP. It functions in the pathway cell wall biogenesis; peptidoglycan biosynthesis. Functionally, catalyzes the initial step of the lipid cycle reactions in the biosynthesis of the cell wall peptidoglycan: transfers peptidoglycan precursor phospho-MurNAc-pentapeptide from UDP-MurNAc-pentapeptide onto the lipid carrier undecaprenyl phosphate, yielding undecaprenyl-pyrophosphoryl-MurNAc-pentapeptide, known as lipid I. This is Phospho-N-acetylmuramoyl-pentapeptide-transferase from Vesicomyosocius okutanii subsp. Calyptogena okutanii (strain HA).